Reading from the N-terminus, the 310-residue chain is MNELPLHLLNMRSLTRDHIEKLIQRANYFLTQGMEKNSVFETLKGHVVVNLFFEPSTRTRNSFEIAAKRLGAMVLNPNLKISAISKGETLFDTIKTLEAMGVYFFIVRHSENETPEQIAKQLSSGVVINAGDGNHQHPSQALIDLMTIKQHKPHWNKLCVTIIGDIRHSRVANSLMDGLVTMGVPEIRLVGPSSLLPDKVGNDSIKKFTELKPSLLNSDVIVTLRLQKERHDNSVDIDAFRGSFRLTPEKLYSAKPDAIVMHPGPVNREVEINSDVADNQQSVILQQVRNGVAMRMAVLELFLLRDFRFF.

R58 and T59 together coordinate carbamoyl phosphate. K86 contacts L-aspartate. Residues R108, H137, and Q140 each coordinate carbamoyl phosphate. R170 and R225 together coordinate L-aspartate. G264 and P265 together coordinate carbamoyl phosphate.

It belongs to the aspartate/ornithine carbamoyltransferase superfamily. ATCase family. In terms of assembly, heterododecamer (2C3:3R2) of six catalytic PyrB chains organized as two trimers (C3), and six regulatory PyrI chains organized as three dimers (R2).

It catalyses the reaction carbamoyl phosphate + L-aspartate = N-carbamoyl-L-aspartate + phosphate + H(+). Its pathway is pyrimidine metabolism; UMP biosynthesis via de novo pathway; (S)-dihydroorotate from bicarbonate: step 2/3. Catalyzes the condensation of carbamoyl phosphate and aspartate to form carbamoyl aspartate and inorganic phosphate, the committed step in the de novo pyrimidine nucleotide biosynthesis pathway. The chain is Aspartate carbamoyltransferase catalytic subunit from Coxiella burnetii (strain CbuK_Q154) (Coxiella burnetii (strain Q154)).